Here is a 201-residue protein sequence, read N- to C-terminus: 3-isopropylmalate dehydratase small subunit (201 aa).

Belongs to the LeuD family. LeuD type 1 subfamily. In terms of assembly, heterodimer of LeuC and LeuD.

The catalysed reaction is (2R,3S)-3-isopropylmalate = (2S)-2-isopropylmalate. It functions in the pathway amino-acid biosynthesis; L-leucine biosynthesis; L-leucine from 3-methyl-2-oxobutanoate: step 2/4. In terms of biological role, catalyzes the isomerization between 2-isopropylmalate and 3-isopropylmalate, via the formation of 2-isopropylmaleate. The chain is 3-isopropylmalate dehydratase small subunit from Sinorhizobium medicae (strain WSM419) (Ensifer medicae).